Reading from the N-terminus, the 48-residue chain is M-oxotoxin-Ot1a (48 aa).

In terms of tissue distribution, expressed by the venom gland.

It is found in the secreted. It localises to the target cell membrane. In terms of biological role, disrupts cell membranes, particularly those rich in phosphocholine, through formation of pores. Has antimicrobial activity against Gram-negative bacterium E.coli, Gram-positive bacteria B.subtilis and S.aureus, and hemolytic activity against sheep, pig and guinea pig erythrocytes. Has insecticidal activity against S.frugiperda ovarian cells by opening non-selective ion channels. Enhances the insecticidal activity of spider venom neurotoxic peptides. This Oxyopes takobius (Lynx spider) protein is M-oxotoxin-Ot1a.